The primary structure comprises 313 residues: Ribosomal RNA small subunit methyltransferase H (313 aa).

S-adenosyl-L-methionine is bound by residues 35 to 37, D55, F81, D103, and Q110; that span reads GGH.

Belongs to the methyltransferase superfamily. RsmH family.

The protein localises to the cytoplasm. The enzyme catalyses cytidine(1402) in 16S rRNA + S-adenosyl-L-methionine = N(4)-methylcytidine(1402) in 16S rRNA + S-adenosyl-L-homocysteine + H(+). Its function is as follows. Specifically methylates the N4 position of cytidine in position 1402 (C1402) of 16S rRNA. This is Ribosomal RNA small subunit methyltransferase H from Pseudomonas syringae pv. tomato (strain ATCC BAA-871 / DC3000).